The chain runs to 1103 residues: Coatomer subunit beta (1103 aa).

7 HEAT repeats span residues 51–89, 94–129, 130–166, 247–284, 322–359, 365–404, and 405–441; these read EAYTRLLMTVIRYAMPSKDKRVKKLTQLYLEIVGKCRPD, EEMILICNALRNDLMSPNEYVRGSTLRLLSKIRQFK, VLEPLVEAILQNLTHRHSYVRRNAVMCVYSIVKNFGL, QQKAGLLRLIVSILPNTLPSVAYEGACSLLALSRAPVS, RTMEEFVIDLLRGLQTPSLEVRRKILDLVLQIVGKNSV, VLKRELLRTAEPEQLTVPRTMEYRRLLIKAVHSCCTRFPE, and AAASVVNVLIDFPGDPDVTTATEVAVVVRELVATCVH.

As to quaternary structure, oligomeric complex that consists of at least the alpha, beta, beta', gamma, delta, epsilon and zeta subunits.

Its subcellular location is the cytoplasm. The protein resides in the golgi apparatus membrane. The protein localises to the cytoplasmic vesicle. It is found in the COPI-coated vesicle membrane. Functionally, the coatomer is a cytosolic protein complex that binds to dilysine motifs and reversibly associates with Golgi non-clathrin-coated vesicles, which further mediate biosynthetic protein transport from the ER, via the Golgi up to the trans Golgi network. Coatomer complex is required for budding from Golgi membranes, and is essential for the retrograde Golgi-to-ER transport of dilysine-tagged proteins. This Toxoplasma gondii protein is Coatomer subunit beta.